Here is a 528-residue protein sequence, read N- to C-terminus: Glycerol kinase 5 (528 aa).

ATP contacts are provided by Ser-28 and Ser-29. Glycerol contacts are provided by Arg-98, Asp-275, and Gln-276. ATP is bound by residues Thr-297, Gly-340, and Gly-440.

Belongs to the FGGY kinase family.

The protein localises to the cytoplasm. The catalysed reaction is glycerol + ATP = sn-glycerol 3-phosphate + ADP + H(+). It functions in the pathway polyol metabolism; glycerol degradation via glycerol kinase pathway; sn-glycerol 3-phosphate from glycerol: step 1/1. Its function is as follows. Skin-specific kinase that plays a key role in glycerol metabolism, catalyzing its phosphorylation to produce sn-glycerol 3-phosphate. Involved in skin-specific regulation of sterol regulatory element-binding protein (SREBP) processing and lipid biosynthesis. The polypeptide is Glycerol kinase 5 (GK5) (Bos taurus (Bovine)).